Consider the following 327-residue polypeptide: MKEISGIKVKVESGSKYTTDHGFYAVKDGIRNKKENAVHVRKPDWLKVQKQDSKEYLKVKSITKKHKLSTVCEEARCPNINECWSHGTATIMLMGSVCTRACKFCSVDTGNPKGWLDKDEPMNAAESVKLMGLEYVVLTSVDRDDLEDGGAGHYAATITAIKNLDENIKVEALTPDFAGINENIDKIINTKVDVIAQNIETVERLTHPVRDPRAGYWQTLNFLKYVKQKSPNVLTKTSIMVGLGETDEEIYKTMDDARSVGVDIITLGQYMQPTKHHLSVERFVTPQQFEEYRKVGLEKGFLEVASGPMVRSSYRADRVFKRNNLDL.

The [4Fe-4S] cluster site is built by Cys72, Cys77, Cys83, Cys98, Cys102, Cys105, and Ser313. Positions 83–302 (CWSHGTATIM…RKVGLEKGFL (220 aa)) constitute a Radical SAM core domain.

The protein belongs to the radical SAM superfamily. Lipoyl synthase family. The cofactor is [4Fe-4S] cluster.

It is found in the cytoplasm. The enzyme catalyses [[Fe-S] cluster scaffold protein carrying a second [4Fe-4S](2+) cluster] + N(6)-octanoyl-L-lysyl-[protein] + 2 oxidized [2Fe-2S]-[ferredoxin] + 2 S-adenosyl-L-methionine + 4 H(+) = [[Fe-S] cluster scaffold protein] + N(6)-[(R)-dihydrolipoyl]-L-lysyl-[protein] + 4 Fe(3+) + 2 hydrogen sulfide + 2 5'-deoxyadenosine + 2 L-methionine + 2 reduced [2Fe-2S]-[ferredoxin]. It functions in the pathway protein modification; protein lipoylation via endogenous pathway; protein N(6)-(lipoyl)lysine from octanoyl-[acyl-carrier-protein]: step 2/2. Its function is as follows. Catalyzes the radical-mediated insertion of two sulfur atoms into the C-6 and C-8 positions of the octanoyl moiety bound to the lipoyl domains of lipoate-dependent enzymes, thereby converting the octanoylated domains into lipoylated derivatives. This is Lipoyl synthase from Francisella tularensis subsp. holarctica (strain FTNF002-00 / FTA).